The chain runs to 239 residues: Uridylate kinase (239 aa).

12-15 (KLSG) contributes to the ATP binding site. The involved in allosteric activation by GTP stretch occupies residues 20 to 25 (GDQGAG). Glycine 54 serves as a coordination point for UMP. The ATP site is built by glycine 55 and arginine 59. Residues aspartate 74 and 135–142 (TGNPFFTT) contribute to the UMP site. 3 residues coordinate ATP: threonine 162, tyrosine 168, and aspartate 171.

This sequence belongs to the UMP kinase family. Homohexamer.

The protein resides in the cytoplasm. The enzyme catalyses UMP + ATP = UDP + ADP. Its pathway is pyrimidine metabolism; CTP biosynthesis via de novo pathway; UDP from UMP (UMPK route): step 1/1. With respect to regulation, allosterically activated by GTP. Inhibited by UTP. Its function is as follows. Catalyzes the reversible phosphorylation of UMP to UDP. This is Uridylate kinase from Methylococcus capsulatus (strain ATCC 33009 / NCIMB 11132 / Bath).